A 227-amino-acid polypeptide reads, in one-letter code: Cytochrome c oxidase subunit 2 (227 aa).

The Mitochondrial intermembrane segment spans residues 1–14 (MAHAAQVGLQDATS). The chain crosses the membrane as a helical span at residues 15-45 (PIMEELVIFHDHALMIIFLICFLVLYALFLT). Residues 46–59 (LTTKLTNTSISDAQ) are Mitochondrial matrix-facing. The chain crosses the membrane as a helical span at residues 60–87 (EMETIWTILPAIILILIALPSLRILYLT). Residues 88-227 (DEINDPSFTI…IFEMGPVFTL (140 aa)) lie on the Mitochondrial intermembrane side of the membrane. Residues His-161, Cys-196, Glu-198, Cys-200, His-204, and Met-207 each coordinate Cu cation. Mg(2+) is bound at residue Glu-198.

The protein belongs to the cytochrome c oxidase subunit 2 family. In terms of assembly, component of the cytochrome c oxidase (complex IV, CIV), a multisubunit enzyme composed of 14 subunits. The complex is composed of a catalytic core of 3 subunits MT-CO1, MT-CO2 and MT-CO3, encoded in the mitochondrial DNA, and 11 supernumerary subunits COX4I, COX5A, COX5B, COX6A, COX6B, COX6C, COX7A, COX7B, COX7C, COX8 and NDUFA4, which are encoded in the nuclear genome. The complex exists as a monomer or a dimer and forms supercomplexes (SCs) in the inner mitochondrial membrane with NADH-ubiquinone oxidoreductase (complex I, CI) and ubiquinol-cytochrome c oxidoreductase (cytochrome b-c1 complex, complex III, CIII), resulting in different assemblies (supercomplex SCI(1)III(2)IV(1) and megacomplex MCI(2)III(2)IV(2)). Found in a complex with TMEM177, COA6, COX18, COX20, SCO1 and SCO2. Interacts with TMEM177 in a COX20-dependent manner. Interacts with COX20. Interacts with COX16. Cu cation serves as cofactor.

It localises to the mitochondrion inner membrane. It catalyses the reaction 4 Fe(II)-[cytochrome c] + O2 + 8 H(+)(in) = 4 Fe(III)-[cytochrome c] + 2 H2O + 4 H(+)(out). In terms of biological role, component of the cytochrome c oxidase, the last enzyme in the mitochondrial electron transport chain which drives oxidative phosphorylation. The respiratory chain contains 3 multisubunit complexes succinate dehydrogenase (complex II, CII), ubiquinol-cytochrome c oxidoreductase (cytochrome b-c1 complex, complex III, CIII) and cytochrome c oxidase (complex IV, CIV), that cooperate to transfer electrons derived from NADH and succinate to molecular oxygen, creating an electrochemical gradient over the inner membrane that drives transmembrane transport and the ATP synthase. Cytochrome c oxidase is the component of the respiratory chain that catalyzes the reduction of oxygen to water. Electrons originating from reduced cytochrome c in the intermembrane space (IMS) are transferred via the dinuclear copper A center (CU(A)) of subunit 2 and heme A of subunit 1 to the active site in subunit 1, a binuclear center (BNC) formed by heme A3 and copper B (CU(B)). The BNC reduces molecular oxygen to 2 water molecules using 4 electrons from cytochrome c in the IMS and 4 protons from the mitochondrial matrix. The sequence is that of Cytochrome c oxidase subunit 2 (MT-CO2) from Pongo abelii (Sumatran orangutan).